The chain runs to 460 residues: Dynactin subunit 4 (460 aa).

Ala-2 is modified (N-acetylalanine). The stretch at 152–172 (QQLAQKEKVERDRKKLARRRN) forms a coiled coil. Ser-196 carries the post-translational modification Phosphoserine. A Glycyl lysine isopeptide (Lys-Gly) (interchain with G-Cter in SUMO2) cross-link involves residue Lys-215. The residue at position 407 (Thr-407) is a Phosphothreonine.

This sequence belongs to the dynactin subunit 4 family. In terms of assembly, subunit of dynactin, a multiprotein complex part of a tripartite complex with dynein and a adapter, such as BICDL1, BICD2 or HOOK3. The dynactin complex is built around ACTR1A/ACTB filament and consists of an actin-related filament composed of a shoulder domain, a pointed end and a barbed end. Its length is defined by its flexible shoulder domain. The soulder is composed of 2 DCTN1 subunits, 4 DCTN2 and 2 DCTN3. The 4 DCNT2 (via N-terminus) bind the ACTR1A filament and act as molecular rulers to determine the length. The pointed end is important for binding dynein-dynactin cargo adapters. Consists of 4 subunits: ACTR10, DCNT4, DCTN5 and DCTN6. The barbed end is composed of a CAPZA1:CAPZB heterodimers, which binds ACTR1A/ACTB filament and dynactin and stabilizes dynactin. Interacts with ATP7B, but not ATP7A, in a copper-dependent manner. Interacts with ANK2; this interaction is required for localization at costameres. Interacts with N4BP2L1.

Its subcellular location is the cytoplasm. The protein resides in the cytoskeleton. It is found in the microtubule organizing center. The protein localises to the centrosome. It localises to the stress fiber. Its subcellular location is the cell cortex. The protein resides in the myofibril. It is found in the sarcomere. Its function is as follows. Part of the dynactin complex that activates the molecular motor dynein for ultra-processive transport along microtubules. This Homo sapiens (Human) protein is Dynactin subunit 4.